The primary structure comprises 146 residues: Large ribosomal subunit protein uL15 (146 aa).

Over residues 1–13 (MKLHELKPSEGSR) the composition is skewed to basic and acidic residues. A disordered region spans residues 1–54 (MKLHELKPSEGSRKVRNRVGRGIGSGNGKTAGKGHKGQNARSGGGVRPGFEGGQ). 2 stretches are compositionally biased toward gly residues: residues 21–31 (RGIGSGNGKTA) and 42–52 (SGGGVRPGFEG).

The protein belongs to the universal ribosomal protein uL15 family. Part of the 50S ribosomal subunit.

Its function is as follows. Binds to the 23S rRNA. The sequence is that of Large ribosomal subunit protein uL15 from Bacillus velezensis (strain DSM 23117 / BGSC 10A6 / LMG 26770 / FZB42) (Bacillus amyloliquefaciens subsp. plantarum).